A 199-amino-acid chain; its full sequence is Segregation and condensation protein B (199 aa).

This sequence belongs to the ScpB family. As to quaternary structure, homodimer. Homodimerization may be required to stabilize the binding of ScpA to the Smc head domains. Component of a cohesin-like complex composed of ScpA, ScpB and the Smc homodimer, in which ScpA and ScpB bind to the head domain of Smc. The presence of the three proteins is required for the association of the complex with DNA.

Its subcellular location is the cytoplasm. Functionally, participates in chromosomal partition during cell division. May act via the formation of a condensin-like complex containing Smc and ScpA that pull DNA away from mid-cell into both cell halves. In Leuconostoc mesenteroides subsp. mesenteroides (strain ATCC 8293 / DSM 20343 / BCRC 11652 / CCM 1803 / JCM 6124 / NCDO 523 / NBRC 100496 / NCIMB 8023 / NCTC 12954 / NRRL B-1118 / 37Y), this protein is Segregation and condensation protein B.